Reading from the N-terminus, the 589-residue chain is MATGKGAAASTQEGKSQPFKVTPGPFDPATWLEWSRQWQGTEGNGHAAASGIPGLDALAGVKIAPAQLGDIQQRYMKDFSALWQAMAEGKAEATGPLHDRRFAGDAWRTNLPYRFAAAFYLLNARALTELADAVEADAKTRQRIRFAISQWVDAMSPANFLATNPEAQRLLIESGGESLRAGVRNMMEDLTRGKISQTDESAFEVGRNVAVTEGAVVFENEYFQLLQYKPLTDKVHARPLLMVPPCINKYYILDLQPESSLVRHVVEQGHTVFLVSWRNPDASMAGSTWDDYIEHAAIRAIEVARDISGQDKINVLGFCVGGTIVSTALAVLAARGEHPAASVTLLTTLLDFADTGILDVFVDEGHVQLREATLGGGAGAPCALLRGLELANTFSFLRPNDLVWNYVVDNYLKGNTPVPFDLLFWNGDATNLPGPWYCWYLRHTYLQNELKVPGKLTVCGVPVDLASIDVPTYIYGSREDHIVPWTAAYASTALLANKLRFVLGASGHIAGVINPPAKNKRSHWTNDALPESPQQWLAGAIEHHGSWWPDWTAWLAGQAGAKRAAPANYGNARYRAIEPAPGRYVKAKA.

The interval 1-23 (MATGKGAAASTQEGKSQPFKVTP) is disordered. Cys-319 is a catalytic residue.

It belongs to the PHA/PHB synthase family. Type I PhaC subfamily. As to quaternary structure, monomer.

The protein resides in the cytoplasm. It carries out the reaction (3R)-3-hydroxybutanoyl-CoA + [(3R)-hydroxybutanoate](n) = [(3R)-hydroxybutanoate](n+1) + CoA. It functions in the pathway biopolymer metabolism; poly-(R)-3-hydroxybutanoate biosynthesis. Its function is as follows. Polymerizes (R)-3-hydroxybutyryl-CoA to create polyhydroxybutyrate (PHB) which consists of thousands of hydroxybutyrate molecules linked end to end. PHB serves as an intracellular energy reserve material when cells grow under conditions of nutrient limitation. This is Poly(3-hydroxyalkanoate) polymerase subunit PhaC from Cupriavidus necator (strain ATCC 17699 / DSM 428 / KCTC 22496 / NCIMB 10442 / H16 / Stanier 337) (Ralstonia eutropha).